Here is a 522-residue protein sequence, read N- to C-terminus: Maturase K (522 aa).

Belongs to the intron maturase 2 family. MatK subfamily.

The protein resides in the plastid. The protein localises to the chloroplast. Usually encoded in the trnK tRNA gene intron. Probably assists in splicing its own and other chloroplast group II introns. The chain is Maturase K from Iris sanguinea (Japanese iris).